The sequence spans 204 residues: Thymidylate kinase (204 aa).

9-16 contacts ATP; the sequence is GLDGAGKS.

The protein belongs to the thymidylate kinase family.

The catalysed reaction is dTMP + ATP = dTDP + ADP. Functionally, phosphorylation of dTMP to form dTDP in both de novo and salvage pathways of dTTP synthesis. The chain is Thymidylate kinase from Francisella philomiragia subsp. philomiragia (strain ATCC 25017 / CCUG 19701 / FSC 153 / O#319-036).